The following is a 54-amino-acid chain: 2-aminomuconate deaminase (54 aa).

Homohexamer.

It carries out the reaction (2Z,4E)-2-aminomuconate + H2O = (3E)-2-oxohex-3-enedioate + NH4(+). It functions in the pathway xenobiotic degradation; nitrobenzene degradation. Functionally, converts 2-aminomuconate to 4-oxalocrotonate, an intermediate step in the biodegradation of nitrobenzene. The protein is 2-aminomuconate deaminase of Ectopseudomonas oleovorans (Pseudomonas oleovorans).